We begin with the raw amino-acid sequence, 138 residues long: Basic phospholipase A2 BP-I (138 aa).

The N-terminal stretch at 1-16 (MRTLWIMAVLLLGVDG) is a signal peptide. Intrachain disulfides connect Cys42–Cys132, Cys44–Cys60, Cys59–Cys112, Cys65–Cys138, Cys66–Cys105, Cys73–Cys98, and Cys91–Cys103. Ca(2+)-binding residues include Gly45 and Gly47. His63 is an active-site residue. Asp106 is an active-site residue.

It belongs to the phospholipase A2 family. Group II subfamily. K49 sub-subfamily. Requires Ca(2+) as cofactor. As to expression, expressed by the venom gland.

Its subcellular location is the secreted. It catalyses the reaction a 1,2-diacyl-sn-glycero-3-phosphocholine + H2O = a 1-acyl-sn-glycero-3-phosphocholine + a fatty acid + H(+). Snake venom phospholipase A2 (PLA2) that has strong myotoxic activity with a low phospholipase A2 activity. PLA2 catalyzes the calcium-dependent hydrolysis of the 2-acyl groups in 3-sn-phosphoglycerides. This is Basic phospholipase A2 BP-I from Protobothrops flavoviridis (Habu).